Here is a 366-residue protein sequence, read N- to C-terminus: MSEEEQGSGTTTGCGLPSIEQMLAANPGKTPISLLQEYGTRIGKTPVYDLLKAEGQAHQPNFTFRVTVGDTSCTGQGPSKKAAKHKAAEVALKHLKGGSMLEPALEDSSSFSPLDSSLPEDVPVFTAAAAATPVPSAVPTRSSPMEVQPPVSPQQSECNPVGALQELVVQKGWRLPEYTVTQESGPAHRKEFTMTCRVERFIEIGSGTSKKLAKRNAAAKMLLRVHTVPLDARDGNEAEPEDDHFSIGVGSRLDGLRNRGPGCTWDSLRNSVGEKILSLRSCSLGSLGALGPACCSVLSELSEEQAFHVSYLDIEELSLSGLCQCLVELSTQPATVCHGSAATREAARGEAARRALQYLKIMAGSK.

Sufficient for interaction with PRKRA regions lie at residues 22–105, 152–234, and 287–366; these read MLAA…EPAL, SPQQ…DARD, and LGAL…AGSK. Positions 30 to 97 constitute a DRBM 1 domain; that stretch reads TPISLLQEYG…AEVALKHLKG (68 aa). A disordered region spans residues 135 to 158; the sequence is PSAVPTRSSPMEVQPPVSPQQSEC. A Phosphoserine modification is found at Ser152. 2 consecutive DRBM domains span residues 159–227 and 293–361; these read NPVG…RVHT and ACCS…YLKI. Positions 228–366 are sufficient for interaction with DICER1; that stretch reads VPLDARDGNE…QYLKIMAGSK (139 aa).

Belongs to the TARBP2 family. In terms of assembly, self-associates. Component of the RISC loading complex (RLC), or micro-RNA (miRNA) loading complex (miRLC), which is composed of DICER1, AGO2 and TARBP2. Note that the trimeric RLC/miRLC is also referred to as RISC. Interacts with EIF2AK2/PKR and inhibits its protein kinase activity. Interacts with DHX9 and PRKRA. Interacts with DICER1, AGO2, MOV10, EIF6 and RPL7A (60S ribosome subunit); they form a large RNA-induced silencing complex (RISC). Interacts with IRF7; this interaction prevents IRF7 phosphorylation and activation.

It localises to the cytoplasm. It is found in the perinuclear region. The protein localises to the nucleus. In terms of biological role, required for formation of the RNA induced silencing complex (RISC). Component of the RISC loading complex (RLC), also known as the micro-RNA (miRNA) loading complex (miRLC), which is composed of DICER1, AGO2 and TARBP2. Within the RLC/miRLC, DICER1 and TARBP2 are required to process precursor miRNAs (pre-miRNAs) to mature miRNAs and then load them onto AGO2. AGO2 bound to the mature miRNA constitutes the minimal RISC and may subsequently dissociate from DICER1 and TARBP2. May also play a role in the production of short interfering RNAs (siRNAs) from double-stranded RNA (dsRNA) by DICER1. Binds in vitro to the PRM1 3'-UTR. Seems to act as a repressor of translation. For some pre-miRNA substrates, may also alter the choice of cleavage site by DICER1. Negatively regulates IRF7-mediated IFN-beta signaling triggered by viral infection by inhibiting the phosphorylation of IRF7 and promoting its 'Lys'-48-linked ubiquitination and degradation. The polypeptide is RISC-loading complex subunit TARBP2 (Bos taurus (Bovine)).